Consider the following 419-residue polypeptide: Metacaspase-1A (419 aa).

A disordered region spans residues Met-1–Gln-89. Over residues Asn-41–Gly-51 the composition is skewed to polar residues. The segment covering Tyr-59–Gln-71 has biased composition (low complexity). Catalysis depends on residues His-190 and Cys-246.

This sequence belongs to the peptidase C14B family.

In terms of biological role, involved in cell death (apoptosis). The chain is Metacaspase-1A (casA) from Aspergillus oryzae (strain ATCC 42149 / RIB 40) (Yellow koji mold).